The chain runs to 185 residues: Adenylate kinase (185 aa).

8–16 provides a ligand contact to ATP; it reads GIPGSGSTT.

This sequence belongs to the archaeal adenylate kinase family.

It is found in the cytoplasm. It catalyses the reaction AMP + ATP = 2 ADP. The protein is Adenylate kinase (adkA) of Methanothermobacter thermautotrophicus (strain ATCC 29096 / DSM 1053 / JCM 10044 / NBRC 100330 / Delta H) (Methanobacterium thermoautotrophicum).